The following is a 152-amino-acid chain: SsrA-binding protein (152 aa).

Positions Arg132–Asp142 are enriched in basic and acidic residues. A disordered region spans residues Arg132–Arg152.

This sequence belongs to the SmpB family.

It is found in the cytoplasm. In terms of biological role, required for rescue of stalled ribosomes mediated by trans-translation. Binds to transfer-messenger RNA (tmRNA), required for stable association of tmRNA with ribosomes. tmRNA and SmpB together mimic tRNA shape, replacing the anticodon stem-loop with SmpB. tmRNA is encoded by the ssrA gene; the 2 termini fold to resemble tRNA(Ala) and it encodes a 'tag peptide', a short internal open reading frame. During trans-translation Ala-aminoacylated tmRNA acts like a tRNA, entering the A-site of stalled ribosomes, displacing the stalled mRNA. The ribosome then switches to translate the ORF on the tmRNA; the nascent peptide is terminated with the 'tag peptide' encoded by the tmRNA and targeted for degradation. The ribosome is freed to recommence translation, which seems to be the essential function of trans-translation. This Bdellovibrio bacteriovorus (strain ATCC 15356 / DSM 50701 / NCIMB 9529 / HD100) protein is SsrA-binding protein.